The sequence spans 87 residues: MVNMKASMFLTFAGLVLLLVVCYASESEEKEFPKEMLSSIFAVDNDFKQEERDCAGYMRECKEKLCCSGYVCSSRWKWCVLPAPWRR.

The N-terminal stretch at 1–24 is a signal peptide; that stretch reads MVNMKASMFLTFAGLVLLLVVCYA. Positions 25–52 are excised as a propeptide; sequence SESEEKEFPKEMLSSIFAVDNDFKQEER. Disulfide bonds link cysteine 54–cysteine 67, cysteine 61–cysteine 72, and cysteine 66–cysteine 79.

It belongs to the neurotoxin 10 (Hwtx-1) family. 51 (Hntx-8) subfamily. Hntx-8 sub-subfamily. As to expression, expressed by the venom gland.

The protein localises to the secreted. In terms of biological role, ion channel inhibitor. The sequence is that of U3-theraphotoxin-Hhn1a 15 from Cyriopagopus hainanus (Chinese bird spider).